The chain runs to 370 residues: Putative agmatine deiminase (370 aa).

Positions 1–19 are enriched in polar residues; that stretch reads MTNMNVDATQLTTKPSQDG. The disordered stretch occupies residues 1-20; that stretch reads MTNMNVDATQLTTKPSQDGF. Residue cysteine 361 is the Amidino-cysteine intermediate of the active site.

It belongs to the agmatine deiminase family.

It carries out the reaction agmatine + H2O = N-carbamoylputrescine + NH4(+). This chain is Putative agmatine deiminase, found in Shewanella frigidimarina (strain NCIMB 400).